The following is a 758-amino-acid chain: 5-methyltetrahydropteroyltriglutamate--homocysteine methyltransferase (758 aa).

5-methyltetrahydropteroyltri-L-glutamate is bound by residues 17-20 and Lys-117; that span reads RELK. L-homocysteine contacts are provided by residues 434 to 436 and Glu-487; that span reads IGS. L-methionine is bound by residues 434–436 and Glu-487; that span reads IGS. 5-methyltetrahydropteroyltri-L-glutamate is bound by residues 518 to 519 and Trp-564; that span reads RC. Asp-602 lines the L-homocysteine pocket. Asp-602 is an L-methionine binding site. Position 608 (Glu-608) interacts with 5-methyltetrahydropteroyltri-L-glutamate. Zn(2+) is bound by residues His-644, Cys-646, and Glu-668. Residue His-697 is the Proton donor of the active site. Residue Cys-729 coordinates Zn(2+).

The protein belongs to the vitamin-B12 independent methionine synthase family. Zn(2+) serves as cofactor.

The catalysed reaction is 5-methyltetrahydropteroyltri-L-glutamate + L-homocysteine = tetrahydropteroyltri-L-glutamate + L-methionine. It functions in the pathway amino-acid biosynthesis; L-methionine biosynthesis via de novo pathway; L-methionine from L-homocysteine (MetE route): step 1/1. Functionally, catalyzes the transfer of a methyl group from 5-methyltetrahydrofolate to homocysteine resulting in methionine formation. The polypeptide is 5-methyltetrahydropteroyltriglutamate--homocysteine methyltransferase (Yersinia enterocolitica serotype O:8 / biotype 1B (strain NCTC 13174 / 8081)).